Consider the following 470-residue polypeptide: MSNPTPTGVVTRFAPSPTGFLHIGGARTALFNWLYARHTGGKFLIRVEDTDRERSTEAAVAAIFEGLDWLGLKSDDEVIFQHTRAPRHVEVVHELLAKGRAYRCWMSIEELEVAREKARAEGRAIRSPWRDAPEGDLSAPHVIRFKGPLDGETLVNDLVKGPVTFKNIELDDLVLLRADGAPTYNLAVVVDDHDMGVTHVIRGDDHLNNAARQTLIYQAMDWAVPAFAHIPLIHGPDGAKLSKRHGAQAVGEFADLGYIPEGMRNYLARLGWGHGDDEVFTDEQAISWFDVADVVKAPARLDWAKLNHINAQHLRKADDARLTALALAAAETRGEPLPADAAERIARTVPEVKEGAKTILELVDHCAFALKTRPLALEEKTQKQLTEETVERLKRLRDQLAAAPDFDAATLETVLKSFAESEGVGFGKFGPALRGVLTGGAQAPDLNKTMAALSRDEAIGRLDDALAPRA.

A 'HIGH' region motif is present at residues 15 to 25 (PSPTGFLHIGG). The short motif at 240–244 (KLSKR) is the 'KMSKS' region element. Lys243 provides a ligand contact to ATP.

This sequence belongs to the class-I aminoacyl-tRNA synthetase family. Glutamate--tRNA ligase type 1 subfamily. Monomer.

The protein localises to the cytoplasm. The enzyme catalyses tRNA(Glu) + L-glutamate + ATP = L-glutamyl-tRNA(Glu) + AMP + diphosphate. Functionally, catalyzes the attachment of glutamate to tRNA(Glu) in a two-step reaction: glutamate is first activated by ATP to form Glu-AMP and then transferred to the acceptor end of tRNA(Glu). This is Glutamate--tRNA ligase from Caulobacter vibrioides (strain ATCC 19089 / CIP 103742 / CB 15) (Caulobacter crescentus).